Consider the following 144-residue polypeptide: Cathelicidin-4 (144 aa).

The signal sequence occupies residues 1–29 (MQTQRASLSLGRWSLWLLLLGLVVPSASA). Residues 30–130 (QALSYREAVL…DLNCNELQSV (101 aa)) constitute a propeptide that is removed on maturation. 2 cysteine pairs are disulfide-bonded: Cys-85–Cys-96 and Cys-107–Cys-124. Residue Arg-143 is modified to Arginine amide.

It belongs to the cathelicidin family. Elastase might be responsible for its maturation. In terms of tissue distribution, large granules of neutrophils.

Its subcellular location is the secreted. Potent microbicidal activity; active against S.aureus and E.coli. In Bos taurus (Bovine), this protein is Cathelicidin-4 (CATHL4).